We begin with the raw amino-acid sequence, 102 residues long: Large ribosomal subunit protein bL21 (102 aa).

This sequence belongs to the bacterial ribosomal protein bL21 family. Part of the 50S ribosomal subunit. Contacts protein L20.

In terms of biological role, this protein binds to 23S rRNA in the presence of protein L20. This chain is Large ribosomal subunit protein bL21, found in Myxococcus xanthus (strain DK1622).